The chain runs to 883 residues: Translation initiation factor IF-2 (883 aa).

Polar residues predominate over residues 32 to 45 (NDLNGKNNSNSSIN). Disordered stretches follow at residues 32-216 (NDLN…QNKY) and 251-275 (RKLGEKKKQQQESQKSYKRKKAETE). Residues 46 to 62 (LDKHNNKVEYSQNRDNR) show a composition bias toward basic and acidic residues. The span at 75–216 (GGYSQNRDNR…VGKNTSQNKY (142 aa)) shows a compositional bias: polar residues. Basic and acidic residues predominate over residues 251–260 (RKLGEKKKQQ). The 174-residue stretch at 381-554 (EKPPVITIMG…DMMLLKANPS (174 aa)) folds into the tr-type G domain. Residues 390–397 (GHVDHGKT) are G1. 390–397 (GHVDHGKT) contributes to the GTP binding site. Residues 415–419 (GITQH) are G2. Residues 436–439 (DTPG) are G3. Residues 436–440 (DTPGH) and 490–493 (NKID) contribute to the GTP site. Residues 490 to 493 (NKID) form a G4 region. The interval 526–528 (SAL) is G5.

This sequence belongs to the TRAFAC class translation factor GTPase superfamily. Classic translation factor GTPase family. IF-2 subfamily.

Its subcellular location is the cytoplasm. Functionally, one of the essential components for the initiation of protein synthesis. Protects formylmethionyl-tRNA from spontaneous hydrolysis and promotes its binding to the 30S ribosomal subunits. Also involved in the hydrolysis of GTP during the formation of the 70S ribosomal complex. The chain is Translation initiation factor IF-2 from Borrelia garinii subsp. bavariensis (strain ATCC BAA-2496 / DSM 23469 / PBi) (Borreliella bavariensis).